We begin with the raw amino-acid sequence, 373 residues long: Cell division protein FtsZ 1 (373 aa).

Residues Gly-51–Asn-55, Gly-138–Gly-140, Glu-169, Arg-173, and Asp-216 contribute to the GTP site. Positions Glu-354–Leu-373 are disordered. Residues Glu-360–Leu-373 are compositionally biased toward basic and acidic residues.

This sequence belongs to the FtsZ family. In terms of assembly, homodimer. Polymerizes to form a dynamic ring structure in a strictly GTP-dependent manner. Interacts directly with several other division proteins.

Its subcellular location is the cytoplasm. In terms of biological role, essential cell division protein that forms a contractile ring structure (Z ring) at the future cell division site. The regulation of the ring assembly controls the timing and the location of cell division. One of the functions of the FtsZ ring is to recruit other cell division proteins to the septum to produce a new cell wall between the dividing cells. Binds GTP and shows GTPase activity. The polypeptide is Cell division protein FtsZ 1 (Thermococcus kodakarensis (strain ATCC BAA-918 / JCM 12380 / KOD1) (Pyrococcus kodakaraensis (strain KOD1))).